The sequence spans 150 residues: Galectin-2 (150 aa).

One can recognise a Galectin domain in the interval 9-141 (NQVKLQNDFK…FSSPVTVDVH (133 aa)). Histidine 51, arginine 55, asparagine 64, glutamate 75, and arginine 77 together coordinate a carbohydrate.

As to quaternary structure, homotetramer. Oligomerization is required for carbohydrate binding.

It localises to the secreted. The protein resides in the extracellular space. It is found in the extracellular matrix. Its subcellular location is the cell wall. The protein localises to the endomembrane system. Functionally, binds lactose. May play a role in fruiting body formation. Displays toxicity towards the nematode C.elegans by binding to a specific Gal-beta-1,4-Fuc-alpha-1,6 modification of N-glycan cores on C.elegans intestinal cells. This is Galectin-2 (Cgl2) from Coprinopsis cinerea (Inky cap fungus).